A 167-amino-acid polypeptide reads, in one-letter code: SsrA-binding protein (167 aa).

Residues glutamine 139–alanine 167 form a disordered region. The span at arginine 144–arginine 158 shows a compositional bias: basic and acidic residues.

The protein belongs to the SmpB family.

It is found in the cytoplasm. Required for rescue of stalled ribosomes mediated by trans-translation. Binds to transfer-messenger RNA (tmRNA), required for stable association of tmRNA with ribosomes. tmRNA and SmpB together mimic tRNA shape, replacing the anticodon stem-loop with SmpB. tmRNA is encoded by the ssrA gene; the 2 termini fold to resemble tRNA(Ala) and it encodes a 'tag peptide', a short internal open reading frame. During trans-translation Ala-aminoacylated tmRNA acts like a tRNA, entering the A-site of stalled ribosomes, displacing the stalled mRNA. The ribosome then switches to translate the ORF on the tmRNA; the nascent peptide is terminated with the 'tag peptide' encoded by the tmRNA and targeted for degradation. The ribosome is freed to recommence translation, which seems to be the essential function of trans-translation. This is SsrA-binding protein from Xylella fastidiosa (strain 9a5c).